A 301-amino-acid polypeptide reads, in one-letter code: Methionyl-tRNA formyltransferase (301 aa).

A (6S)-5,6,7,8-tetrahydrofolate-binding site is contributed by 109 to 112 (SLLP).

The protein belongs to the Fmt family.

The enzyme catalyses L-methionyl-tRNA(fMet) + (6R)-10-formyltetrahydrofolate = N-formyl-L-methionyl-tRNA(fMet) + (6S)-5,6,7,8-tetrahydrofolate + H(+). Its function is as follows. Attaches a formyl group to the free amino group of methionyl-tRNA(fMet). The formyl group appears to play a dual role in the initiator identity of N-formylmethionyl-tRNA by promoting its recognition by IF2 and preventing the misappropriation of this tRNA by the elongation apparatus. The protein is Methionyl-tRNA formyltransferase of Novosphingobium aromaticivorans (strain ATCC 700278 / DSM 12444 / CCUG 56034 / CIP 105152 / NBRC 16084 / F199).